An 845-amino-acid chain; its full sequence is Translation initiation factor IF-2 (845 aa).

Disordered stretches follow at residues R45–S91 and E127–V209. Residues S81–S91 are compositionally biased toward polar residues. Basic and acidic residues predominate over residues T137–N149. Polar residues predominate over residues P151–S162. Over residues T179–H193 the composition is skewed to basic and acidic residues. The 170-residue stretch at P343–K512 folds into the tr-type G domain. The tract at residues G352 to T359 is G1. Position 352–359 (G352–T359) interacts with GTP. A G2 region spans residues G377–H381. The interval D398–G401 is G3. GTP-binding positions include D398–H402 and N452–D455. A G4 region spans residues N452–D455. The tract at residues S488 to K490 is G5.

Belongs to the TRAFAC class translation factor GTPase superfamily. Classic translation factor GTPase family. IF-2 subfamily.

It is found in the cytoplasm. One of the essential components for the initiation of protein synthesis. Protects formylmethionyl-tRNA from spontaneous hydrolysis and promotes its binding to the 30S ribosomal subunits. Also involved in the hydrolysis of GTP during the formation of the 70S ribosomal complex. The protein is Translation initiation factor IF-2 of Bartonella quintana (strain Toulouse) (Rochalimaea quintana).